A 331-amino-acid chain; its full sequence is UDP-N-acetylenolpyruvoylglucosamine reductase (331 aa).

An FAD-binding PCMH-type domain is found at 54 to 221 (RVGGAAELYV…TQATFQLQPG (168 aa)). Arginine 200 is an active-site residue. Serine 251 functions as the Proton donor in the catalytic mechanism. The active site involves glutamate 321.

The protein belongs to the MurB family. FAD serves as cofactor.

The protein resides in the cytoplasm. It carries out the reaction UDP-N-acetyl-alpha-D-muramate + NADP(+) = UDP-N-acetyl-3-O-(1-carboxyvinyl)-alpha-D-glucosamine + NADPH + H(+). The protein operates within cell wall biogenesis; peptidoglycan biosynthesis. Its function is as follows. Cell wall formation. The chain is UDP-N-acetylenolpyruvoylglucosamine reductase from Trichormus variabilis (strain ATCC 29413 / PCC 7937) (Anabaena variabilis).